Consider the following 255-residue polypeptide: Acetyl-coenzyme A carboxylase carboxyl transferase subunit alpha (255 aa).

The region spanning 1-235 (MNIAKIVREA…KKELQTELAR (235 aa)) is the CoA carboxyltransferase C-terminal domain.

Belongs to the AccA family. As to quaternary structure, acetyl-CoA carboxylase is a heterohexamer composed of biotin carboxyl carrier protein (AccB), biotin carboxylase (AccC) and two subunits each of ACCase subunit alpha (AccA) and ACCase subunit beta (AccD).

It localises to the cytoplasm. The catalysed reaction is N(6)-carboxybiotinyl-L-lysyl-[protein] + acetyl-CoA = N(6)-biotinyl-L-lysyl-[protein] + malonyl-CoA. The protein operates within lipid metabolism; malonyl-CoA biosynthesis; malonyl-CoA from acetyl-CoA: step 1/1. Functionally, component of the acetyl coenzyme A carboxylase (ACC) complex. First, biotin carboxylase catalyzes the carboxylation of biotin on its carrier protein (BCCP) and then the CO(2) group is transferred by the carboxyltransferase to acetyl-CoA to form malonyl-CoA. The chain is Acetyl-coenzyme A carboxylase carboxyl transferase subunit alpha from Streptococcus pneumoniae (strain CGSP14).